The following is a 331-amino-acid chain: tRNA (guanine-N(7)-)-methyltransferase (331 aa).

Glutamate 29, glutamate 55, and aspartate 105 together coordinate S-adenosyl-L-methionine. Residue aspartate 105 is part of the active site. Substrate-binding residues include lysine 109 and aspartate 141.

This sequence belongs to the class I-like SAM-binding methyltransferase superfamily. TrmB family.

The catalysed reaction is guanosine(46) in tRNA + S-adenosyl-L-methionine = N(7)-methylguanosine(46) in tRNA + S-adenosyl-L-homocysteine. Its pathway is tRNA modification; N(7)-methylguanine-tRNA biosynthesis. Functionally, catalyzes the formation of N(7)-methylguanine at position 46 (m7G46) in tRNA. The chain is tRNA (guanine-N(7)-)-methyltransferase from Deinococcus geothermalis (strain DSM 11300 / CIP 105573 / AG-3a).